Here is a 278-residue protein sequence, read N- to C-terminus: Potassium/proton antiporter CemA (278 aa).

4 helical membrane passes run 61 to 81, 155 to 175, 203 to 223, and 238 to 258; these read IFLL…FDFG, AVKN…LMIT, IILF…EVII, and FIFL…KYWI.

Belongs to the CemA family.

The protein localises to the plastid. The protein resides in the chloroplast inner membrane. The catalysed reaction is K(+)(in) + H(+)(out) = K(+)(out) + H(+)(in). Functionally, contributes to K(+)/H(+) antiport activity by supporting proton efflux to control proton extrusion and homeostasis in chloroplasts in a light-dependent manner to modulate photosynthesis. Prevents excessive induction of non-photochemical quenching (NPQ) under continuous-light conditions. Indirectly promotes efficient inorganic carbon uptake into chloroplasts. This is Potassium/proton antiporter CemA from Porphyra purpurea (Red seaweed).